The following is a 353-amino-acid chain: 3'-5' exonuclease (353 aa).

The segment at 1-119 (MEKYLTKMPI…PSPEKEKPEK (119 aa)) is disordered. 2 stretches are compositionally biased toward basic and acidic residues: residues 13–30 (KANE…ETPK) and 37–50 (KKDT…KENA). The segment covering 59–70 (TKGRPGRPAAKR) has biased composition (basic residues). Positions 71-90 (KNLDTPDVTEKLAMEEENPP) are enriched in basic and acidic residues. Phosphoserine occurs at positions 103, 109, and 111. One can recognise a 3'-5' exonuclease domain in the interval 145–313 (VLQWVEKQKD…GQVIYRELER (169 aa)). Residues Asp-162, Glu-164, and Asp-300 each contribute to the Mg(2+) site.

This sequence belongs to the WRNexo family.

It is found in the nucleus. Its function is as follows. Has exonuclease activity on both single-stranded and duplex templates bearing overhangs, but not blunt ended duplex DNA, and cleaves in a 3'-5' direction. Essential for the formation of DNA replication focal centers. Has an important role in maintaining genome stability. The protein is 3'-5' exonuclease of Drosophila melanogaster (Fruit fly).